The primary structure comprises 355 residues: Ribosomal RNA small subunit methyltransferase H (355 aa).

S-adenosyl-L-methionine contacts are provided by residues 55 to 57 (GGH), Asp-75, Asp-122, and Gln-129. Positions 327–355 (ERTSQPLPATGAEDFVPAVPGAAEKGRRR) are disordered.

The protein belongs to the methyltransferase superfamily. RsmH family.

It localises to the cytoplasm. It catalyses the reaction cytidine(1402) in 16S rRNA + S-adenosyl-L-methionine = N(4)-methylcytidine(1402) in 16S rRNA + S-adenosyl-L-homocysteine + H(+). In terms of biological role, specifically methylates the N4 position of cytidine in position 1402 (C1402) of 16S rRNA. This is Ribosomal RNA small subunit methyltransferase H from Bordetella avium (strain 197N).